Consider the following 340-residue polypeptide: Sulfotransferase ppzF (340 aa).

It functions in the pathway secondary metabolite biosynthesis. Its function is as follows. Sulfotransferase; part of the gene cluster that mediates the biosynthesis of pyrrolopyrazines, secondary metabolites showing insecticidal activity. The role of ppzF within the pathway has still to be determined. The single multifunctional NRPS ppzA is sufficient to produce peramine via condensation of 1-pyrroline-5-carboxylate and arginine, N-methylation of the alpha-amino group of arginine and reduction of the thioester and the cyclization to form an iminium ion resulting in release from the peptide synthetase. Deprotonation of this intermediate and oxidation of the pyrroline ring would give rise to peramine. In Epichloe species that produce only peramine, the peramine synthetase gene is not localized in a gene cluster, in contrast to Metarhizium species that contain additional pyrrolopyrazine biosynthesis genes. The 2-oxoglutarate-Fe(II) type oxidoreductase ppzC hydroxylates peramine to yield the newly identified compound 8-hydroxyperamine whereas ppzD converts L-proline into trans-4-hydroxy-L-proline, a precursor of peramine biosynthesis. This chain is Sulfotransferase ppzF, found in Metarhizium majus (strain ARSEF 297).